A 149-amino-acid chain; its full sequence is Urease accessory protein UreE (149 aa).

The protein belongs to the UreE family.

The protein resides in the cytoplasm. Its function is as follows. Involved in urease metallocenter assembly. Binds nickel. Probably functions as a nickel donor during metallocenter assembly. This is Urease accessory protein UreE from Prochlorococcus marinus (strain MIT 9312).